A 312-amino-acid chain; its full sequence is Protoheme IX farnesyltransferase (312 aa).

8 helical membrane passes run 34 to 54 (LVIF…HPVL), 56 to 76 (FTAI…NMAL), 119 to 139 (ALVN…YVVI), 152 to 172 (IVIG…AATG), 179 to 199 (LLLF…LALF), 225 to 245 (ILLY…LGYF), 247 to 267 (WVYG…AINV), and 283 to 303 (LFAF…LDVL).

This sequence belongs to the UbiA prenyltransferase family. Protoheme IX farnesyltransferase subfamily.

The protein localises to the cell inner membrane. It catalyses the reaction heme b + (2E,6E)-farnesyl diphosphate + H2O = Fe(II)-heme o + diphosphate. The protein operates within porphyrin-containing compound metabolism; heme O biosynthesis; heme O from protoheme: step 1/1. Its function is as follows. Converts heme B (protoheme IX) to heme O by substitution of the vinyl group on carbon 2 of heme B porphyrin ring with a hydroxyethyl farnesyl side group. This is Protoheme IX farnesyltransferase from Nitrobacter hamburgensis (strain DSM 10229 / NCIMB 13809 / X14).